Reading from the N-terminus, the 375-residue chain is Patatin-1-Kuras 2 (375 aa).

Positions 1 to 11 (MILATTSSTFA) are cleaved as a signal peptide. One can recognise a PNPLA domain in the interval 20–218 (LSIDGGGIKG…TVADPALLSV (199 aa)). A GXGXXG motif is present at residues 24–29 (GGGIKG). The GXSXG motif lies at 63–67 (GTSTG). Serine 65 functions as the Nucleophile in the catalytic mechanism. Asparagine 103 carries N-linked (GlcNAc...) asparagine glycosylation. Aspartate 204 acts as the Proton acceptor in catalysis. The short motif at 204-206 (DGA) is the DGA/G element. Residues 349–373 (ETYEEALKRFAKLLSDRKKLRANKA) are a coiled coil.

Belongs to the patatin family. In terms of tissue distribution, tuber.

The protein localises to the vacuole. Probable lipolytic acyl hydrolase (LAH), an activity which is thought to be involved in the response of tubers to pathogens. The polypeptide is Patatin-1-Kuras 2 (pat1-k2) (Solanum tuberosum (Potato)).